The sequence spans 352 residues: Probable tyrosine-protein kinase DDB_G0290471 (352 aa).

The region spanning 51–333 is the Protein kinase domain; sequence IEYVCRLGSG…ISLNQIRSFY (283 aa). Residues 57-65 and K78 each bind ATP; that span reads LGSGSLCRV. D175 serves as the catalytic Proton acceptor.

Belongs to the protein kinase superfamily. TKL Tyr protein kinase family.

It carries out the reaction L-tyrosyl-[protein] + ATP = O-phospho-L-tyrosyl-[protein] + ADP + H(+). The polypeptide is Probable tyrosine-protein kinase DDB_G0290471 (Dictyostelium discoideum (Social amoeba)).